We begin with the raw amino-acid sequence, 346 residues long: Holliday junction branch migration complex subunit RuvB (346 aa).

The segment at 4–184 (TDRLIAPTAK…FGIVQRLEFY (181 aa)) is large ATPase domain (RuvB-L). Residues R24, G65, K68, T69, T70, 131-133 (EDF), R174, Y184, and R221 contribute to the ATP site. T69 is a Mg(2+) binding site. The tract at residues 185–255 (NVKDLTHIVA…LADKALNMLN (71 aa)) is small ATPAse domain (RuvB-S). Residues 258-346 (ERGFDHMDRR…QESQGGEGIA (89 aa)) are head domain (RuvB-H). DNA contacts are provided by R294, R313, and R318.

Belongs to the RuvB family. As to quaternary structure, homohexamer. Forms an RuvA(8)-RuvB(12)-Holliday junction (HJ) complex. HJ DNA is sandwiched between 2 RuvA tetramers; dsDNA enters through RuvA and exits via RuvB. An RuvB hexamer assembles on each DNA strand where it exits the tetramer. Each RuvB hexamer is contacted by two RuvA subunits (via domain III) on 2 adjacent RuvB subunits; this complex drives branch migration. In the full resolvosome a probable DNA-RuvA(4)-RuvB(12)-RuvC(2) complex forms which resolves the HJ.

The protein resides in the cytoplasm. The enzyme catalyses ATP + H2O = ADP + phosphate + H(+). Its function is as follows. The RuvA-RuvB-RuvC complex processes Holliday junction (HJ) DNA during genetic recombination and DNA repair, while the RuvA-RuvB complex plays an important role in the rescue of blocked DNA replication forks via replication fork reversal (RFR). RuvA specifically binds to HJ cruciform DNA, conferring on it an open structure. The RuvB hexamer acts as an ATP-dependent pump, pulling dsDNA into and through the RuvAB complex. RuvB forms 2 homohexamers on either side of HJ DNA bound by 1 or 2 RuvA tetramers; 4 subunits per hexamer contact DNA at a time. Coordinated motions by a converter formed by DNA-disengaged RuvB subunits stimulates ATP hydrolysis and nucleotide exchange. Immobilization of the converter enables RuvB to convert the ATP-contained energy into a lever motion, pulling 2 nucleotides of DNA out of the RuvA tetramer per ATP hydrolyzed, thus driving DNA branch migration. The RuvB motors rotate together with the DNA substrate, which together with the progressing nucleotide cycle form the mechanistic basis for DNA recombination by continuous HJ branch migration. Branch migration allows RuvC to scan DNA until it finds its consensus sequence, where it cleaves and resolves cruciform DNA. The polypeptide is Holliday junction branch migration complex subunit RuvB (Cellvibrio japonicus (strain Ueda107) (Pseudomonas fluorescens subsp. cellulosa)).